The primary structure comprises 256 residues: Glutamate racemase (256 aa).

Residues 11–12 and 43–44 contribute to the substrate site; these read DS and YG. Cys74 functions as the Proton donor/acceptor in the catalytic mechanism. Position 75–76 (75–76) interacts with substrate; it reads NT. The Proton donor/acceptor role is filled by Cys182. 183–184 lines the substrate pocket; that stretch reads TH.

It belongs to the aspartate/glutamate racemases family.

The catalysed reaction is L-glutamate = D-glutamate. Its pathway is cell wall biogenesis; peptidoglycan biosynthesis. Provides the (R)-glutamate required for cell wall biosynthesis. The protein is Glutamate racemase of Leptospira interrogans serogroup Icterohaemorrhagiae serovar copenhageni (strain Fiocruz L1-130).